The chain runs to 188 residues: Putative ankyrin repeat protein FPV230 (188 aa).

ANK repeat units follow at residues 2–31 (ENELKLYYAVSSQNENLVIQLLNKGYNPNA), 36–65 (KYMIPLHKAVECRNVDITKHLLSNGADANV), 135–164 (LGSTPLHIASKYNNKTMVKFFLERGADINI), and 168–187 (NNNTPLIYAVCSVIRLYLKC).

This chain is Putative ankyrin repeat protein FPV230, found in Vertebrata (FPV).